The sequence spans 85 residues: Putative membrane protein insertion efficiency factor (85 aa).

This sequence belongs to the UPF0161 family.

The protein localises to the cell inner membrane. In terms of biological role, could be involved in insertion of integral membrane proteins into the membrane. The chain is Putative membrane protein insertion efficiency factor from Escherichia coli O6:H1 (strain CFT073 / ATCC 700928 / UPEC).